Consider the following 842-residue polypeptide: ATP-binding cassette sub-family B member 6 (842 aa).

The Lumenal segment spans residues 1-26 (MVTVGNYCETEGPAGPAWTQNGLSPC). The required for the lysosomal targeting stretch occupies residues 1–205 (MVTVGNYCET…SGGLFILGLW (205 aa)). The segment at 1-236 (MVTVGNYCET…GNQGRSTDRR (236 aa)) is required for ATPase activity. A disulfide bridge connects residues Cys8 and Cys26. A helical membrane pass occupies residues 27-47 (FFFTLVPSTLLTLGVLALVLV). Residues 48 to 72 (LPRRRREVPAGPEELSWAAGPRVAP) lie on the Cytoplasmic side of the membrane. The chain crosses the membrane as a helical span at residues 73–93 (YVLQLFLATLQMALPLAGLAG). At 94 to 106 (RVGTARGVRLPGY) the chain is on the lumenal side. A helical transmembrane segment spans residues 107-127 (LLLASVLESLASVCGLWLLVV). Topologically, residues 128-147 (ERSQARQSLAMGVWMKFRHS) are cytoplasmic. The chain crosses the membrane as a helical span at residues 148–168 (LGLLLLWTVTFAAENLALVSW). Residues 169 to 185 (NSPQWWWARADLGQQVQ) lie on the Lumenal side of the membrane. A helical transmembrane segment spans residues 186-206 (FGLWVLRYVTSGGLFILGLWA). At 207 to 263 (PGLRPQSYTLHVHEEDQDVGGNQGRSTDRRSTWRDLGRKLRLLSSYLWPRGSPSLQL) the chain is on the cytoplasmic side. Residues 264–284 (IVLICLGLMGLERALNVLVPI) traverse the membrane as a helical segment. Positions 265-556 (VLICLGLMGL…FGTYYRMIQT (292 aa)) constitute an ABC transmembrane type-1 domain. Residues 285–291 (FYRDIVN) are Lumenal-facing. The helical transmembrane segment at 292–312 (LLTAKAPWSSLAWTVTTYVFL) threads the bilayer. Topologically, residues 313–375 (KFLQGGGTGS…TGEVLRIVDR (63 aa)) are cytoplasmic. The chain crosses the membrane as a helical span at residues 376 to 396 (GTSSVTGLLSYLVFSIIPTLA). A topological domain (lumenal) is located at residue Asp397. The helical transmembrane segment at 398 to 418 (IIIGIIYFSMFFNAWFGLIVF) threads the bilayer. The Cytoplasmic portion of the chain corresponds to 419-499 (LCMSLYLILT…STASLVVLNQ (81 aa)). A helical membrane pass occupies residues 500-520 (TQNLVIGLGLLAGSLLCAYFV). The Lumenal segment spans residues 521-529 (SEQKLQVGD). Residues 530 to 550 (FVLFGTYITQLYMPLNWFGTY) form a helical membrane-spanning segment. The Cytoplasmic portion of the chain corresponds to 551–842 (YRMIQTNFID…PEESKPQDTA (292 aa)). An ABC transporter domain is found at 590–824 (IEFENVHFSY…GGVYAEMWQL (235 aa)). ATP contacts are provided by residues Tyr599 and 623–634 (GPSGAGKSTILR).

It belongs to the ABC transporter superfamily. ABCB family. Heavy Metal importer (TC 3.A.1.210) subfamily. Homodimer. Post-translationally, N-glycosylated.

It is found in the cell membrane. It localises to the mitochondrion outer membrane. Its subcellular location is the endoplasmic reticulum membrane. The protein localises to the golgi apparatus membrane. The protein resides in the endosome membrane. It is found in the lysosome membrane. It localises to the late endosome membrane. Its subcellular location is the early endosome membrane. The protein localises to the secreted. The protein resides in the extracellular exosome. It is found in the mitochondrion. It localises to the endosome. Its subcellular location is the multivesicular body membrane. The protein localises to the melanosome membrane. It carries out the reaction coproporphyrin III(in) + ATP + H2O = coproporphyrin III(out) + ADP + phosphate + H(+). The catalysed reaction is coproporphyrinogen III(in) + ATP + H2O = coproporphyrinogen III(out) + ADP + phosphate + H(+). It catalyses the reaction heme b(in) + ATP + H2O = heme b(out) + ADP + phosphate + H(+). The enzyme catalyses pheophorbide a(in) + ATP + H2O = pheophorbide a(out) + ADP + phosphate + H(+). It carries out the reaction protoporphyrin IX(in) + ATP + H2O = protoporphyrin IX(out) + ADP + phosphate + H(+). The catalysed reaction is coproporphyrin I(in) + ATP + H2O = coproporphyrin I(out) + ADP + phosphate + H(+). It catalyses the reaction uroporphyrin I(in) + ATP + H2O = uroporphyrin I(out) + ADP + phosphate + H(+). The enzyme catalyses uroporphyrin III(in) + ATP + H2O = uroporphyrin III(out) + ADP + phosphate + H(+). In terms of biological role, ATP-dependent transporter that catalyzes the transport of a broad-spectrum of porphyrins from the cytoplasm to the extracellular space through the plasma membrane or into the vesicle lumen. May also function as an ATP-dependent importer of porphyrins from the cytoplasm into the mitochondria, in turn may participate in the de novo heme biosynthesis regulation and in the coordination of heme and iron homeostasis during phenylhydrazine stress. May play a key role in the early steps of melanogenesis producing PMEL amyloid fibrils. In vitro, it confers to cells a resistance to toxic metal such as arsenic and cadmium and against chemotherapeutics agent such as 5-fluorouracil, SN-38 and vincristin. In addition may play a role in the transition metal homeostasis. This chain is ATP-binding cassette sub-family B member 6, found in Mus musculus (Mouse).